Consider the following 159-residue polypeptide: Probable metallophosphoesterase MPN_126 (159 aa).

7 residues coordinate Mn(2+): Asp-9, His-11, Asp-34, Asn-53, His-75, His-107, and His-109.

It belongs to the metallophosphoesterase superfamily. YfcE family. Requires Mn(2+) as cofactor.

The sequence is that of Probable metallophosphoesterase MPN_126 from Mycoplasma pneumoniae (strain ATCC 29342 / M129 / Subtype 1) (Mycoplasmoides pneumoniae).